The primary structure comprises 223 residues: MPTPPEAEKQQTGPEEADQPPSMSSHDAAPPAPPRRNPCCLCWCCCCSCSWNEERRRAWRASRESRLQPLPSCEVCATPTPTPTPTPEEVRSWAQSFDKLMHSPAGRSVFREFLRTEYSEENMLFWLACEELKAEANQHVVDEKARLIYEDYVSILSPKEVSLDSRVREGINKKMQEPSAHTFDDAQLQIYTLMHRDSYPRFLSSPAYRALLLQGASQSSSEA.

The segment at 1-30 (MPTPPEAEKQQTGPEEADQPPSMSSHDAAP) is disordered. Over residues 20 to 29 (PPSMSSHDAA) the composition is skewed to low complexity. Ser-24 and Ser-103 each carry phosphoserine. Positions 96 to 212 (SFDKLMHSPA…LSSPAYRALL (117 aa)) constitute an RGS domain. Ser-157 is subject to Phosphoserine; by MAPK1 and MAPK3. The segment at 213–223 (LQGASQSSSEA) is interaction with GIPC.

In terms of assembly, interacts with GIPC PDZ domain. Interacts with GNAO1. Fatty acylated. Heavily palmitoylated in the cysteine string motif. In terms of processing, phosphorylated, mainly on serine residues.

Its subcellular location is the membrane. Functionally, inhibits signal transduction by increasing the GTPase activity of G protein alpha subunits thereby driving them into their inactive GDP-bound form. Binds to G-alpha subfamily 1 members, with the order G(i)a3 &gt; G(i)a1 &gt; G(o)a &gt;&gt; G(z)a/G(i)a2. Activity on G(z)-alpha is inhibited by phosphorylation and palmitoylation of the G-protein. In Bos taurus (Bovine), this protein is Regulator of G-protein signaling 19 (RGS19).